We begin with the raw amino-acid sequence, 115 residues long: Holo-[acyl-carrier-protein] synthase (115 aa).

Mg(2+) is bound by residues D6 and E51.

It belongs to the P-Pant transferase superfamily. AcpS family. Mg(2+) serves as cofactor.

The protein localises to the cytoplasm. The catalysed reaction is apo-[ACP] + CoA = holo-[ACP] + adenosine 3',5'-bisphosphate + H(+). Its function is as follows. Transfers the 4'-phosphopantetheine moiety from coenzyme A to a Ser of acyl-carrier-protein. This is Holo-[acyl-carrier-protein] synthase from Campylobacter jejuni subsp. jejuni serotype O:6 (strain 81116 / NCTC 11828).